A 341-amino-acid chain; its full sequence is Anthranilate phosphoribosyltransferase (341 aa).

Residues G79, 82–83, T87, 89–92, 107–115, and S119 each bind 5-phospho-alpha-D-ribose 1-diphosphate; these read GD, NIST, and KHGNRAVSS. G79 serves as a coordination point for anthranilate. Position 91 (S91) interacts with Mg(2+). An anthranilate-binding site is contributed by N110. R165 lines the anthranilate pocket. Residues D224 and E225 each contribute to the Mg(2+) site.

It belongs to the anthranilate phosphoribosyltransferase family. As to quaternary structure, homodimer. Mg(2+) is required as a cofactor.

It catalyses the reaction N-(5-phospho-beta-D-ribosyl)anthranilate + diphosphate = 5-phospho-alpha-D-ribose 1-diphosphate + anthranilate. It functions in the pathway amino-acid biosynthesis; L-tryptophan biosynthesis; L-tryptophan from chorismate: step 2/5. Functionally, catalyzes the transfer of the phosphoribosyl group of 5-phosphorylribose-1-pyrophosphate (PRPP) to anthranilate to yield N-(5'-phosphoribosyl)-anthranilate (PRA). This chain is Anthranilate phosphoribosyltransferase, found in Bacillus thuringiensis subsp. konkukian (strain 97-27).